The chain runs to 297 residues: N-acetylmuramic acid 6-phosphate etherase (297 aa).

Positions 56-219 constitute an SIS domain; it reads AIEAFNKGGR…STISMIGIGK (164 aa). Glu84 (proton donor) is an active-site residue. Residue Glu115 is part of the active site.

It belongs to the GCKR-like family. MurNAc-6-P etherase subfamily. In terms of assembly, homodimer.

It carries out the reaction N-acetyl-D-muramate 6-phosphate + H2O = N-acetyl-D-glucosamine 6-phosphate + (R)-lactate. It participates in amino-sugar metabolism; N-acetylmuramate degradation. Its function is as follows. Specifically catalyzes the cleavage of the D-lactyl ether substituent of MurNAc 6-phosphate, producing GlcNAc 6-phosphate and D-lactate. This Lactococcus lactis subsp. cremoris (strain MG1363) protein is N-acetylmuramic acid 6-phosphate etherase.